The chain runs to 309 residues: Ubiquitin-conjugating enzyme E2 32 (309 aa).

In terms of domain architecture, UBC core spans 11 to 166; the sequence is PAVKRILQEV…ERQKIIDEIH (156 aa). C93 (glycyl thioester intermediate) is an active-site residue. The chain crosses the membrane as a helical span at residues 275–295; it reads FTWAAVGLTIAIMVLLLKKFI.

This sequence belongs to the ubiquitin-conjugating enzyme family.

The protein localises to the membrane. The enzyme catalyses S-ubiquitinyl-[E1 ubiquitin-activating enzyme]-L-cysteine + [E2 ubiquitin-conjugating enzyme]-L-cysteine = [E1 ubiquitin-activating enzyme]-L-cysteine + S-ubiquitinyl-[E2 ubiquitin-conjugating enzyme]-L-cysteine.. The protein operates within protein modification; protein ubiquitination. In terms of biological role, accepts the ubiquitin from the E1 complex and catalyzes its covalent attachment to other proteins. The polypeptide is Ubiquitin-conjugating enzyme E2 32 (UBC32) (Arabidopsis thaliana (Mouse-ear cress)).